Reading from the N-terminus, the 122-residue chain is Large ribosomal subunit protein uL14 (122 aa).

It belongs to the universal ribosomal protein uL14 family. Part of the 50S ribosomal subunit. Forms a cluster with proteins L3 and L19. In the 70S ribosome, L14 and L19 interact and together make contacts with the 16S rRNA in bridges B5 and B8.

Its function is as follows. Binds to 23S rRNA. Forms part of two intersubunit bridges in the 70S ribosome. This is Large ribosomal subunit protein uL14 from Protochlamydia amoebophila (strain UWE25).